The primary structure comprises 92 residues: Small ribosomal subunit protein uS19c (92 aa).

It belongs to the universal ribosomal protein uS19 family. As to quaternary structure, component of the chloroplast small ribosomal subunit (SSU). Mature 70S chloroplast ribosomes of higher plants consist of a small (30S) and a large (50S) subunit. The 30S small subunit contains 1 molecule of ribosomal RNA (16S rRNA) and 24 different proteins. The 50S large subunit contains 3 rRNA molecules (23S, 5S and 4.5S rRNA) and 33 different proteins. uS19c binds directly to 16S ribosomal RNA.

The protein localises to the plastid. It is found in the chloroplast. Functionally, component of the chloroplast ribosome (chloro-ribosome), a dedicated translation machinery responsible for the synthesis of chloroplast genome-encoded proteins, including proteins of the transcription and translation machinery and components of the photosynthetic apparatus. In Spinacia oleracea (Spinach), this protein is Small ribosomal subunit protein uS19c (rps19).